Here is a 168-residue protein sequence, read N- to C-terminus: Cysteine-rich perinuclear theca protein 1 (168 aa).

Positions 144–168 (NVSDPEEVPPCLDSDPFPNGDLASS) are disordered.

In terms of tissue distribution, specifically expressed in spermatozoa (at protein level). Detected from the elongated spermatid stage onwards; not found in immature germ cells or somatic cells (at protein level).

It is found in the cytoplasm. The protein localises to the cytoskeleton. It localises to the perinuclear theca. In Mus musculus (Mouse), this protein is Cysteine-rich perinuclear theca protein 1.